Reading from the N-terminus, the 96-residue chain is Large ribosomal subunit protein bL28 (96 aa).

Positions 1–23 (MSRVCELSGKAPMTGNTVSHANN) are disordered.

Belongs to the bacterial ribosomal protein bL28 family.

This chain is Large ribosomal subunit protein bL28, found in Cereibacter sphaeroides (strain ATCC 17029 / ATH 2.4.9) (Rhodobacter sphaeroides).